Reading from the N-terminus, the 110-residue chain is MPNGKADEVWFVYLLRCADGTLYCGVTNNIERRLTQHHRGRGARYTRGRAPFILLGHAPFPGRGEAQRVEYRIKRQPTDQKLACLATIGGDAFVAGALQSAPAEGITWNP.

In terms of domain architecture, GIY-YIG spans 8–83; sequence EVWFVYLLRC…KRQPTDQKLA (76 aa).

This sequence belongs to the UPF0213 family.

The chain is UPF0213 protein DVU_3309 from Nitratidesulfovibrio vulgaris (strain ATCC 29579 / DSM 644 / CCUG 34227 / NCIMB 8303 / VKM B-1760 / Hildenborough) (Desulfovibrio vulgaris).